A 274-amino-acid polypeptide reads, in one-letter code: Histone H1.1 (274 aa).

Disordered regions lie at residues 1 to 63 (MSEV…SSHP) and 129 to 155 (PSAS…PATV). Residue Ser-2 is modified to N-acetylserine. Residues 16 to 25 (TAADAPVTDA) are compositionally biased toward low complexity. Over residues 40-49 (NVKEVKEKKT) the composition is skewed to basic and acidic residues. One can recognise an H15 domain in the interval 61 to 130 (SHPTYEEMIK…KVKASFKLPS (70 aa)). The span at 129–145 (PSASAKASSPKAAAEKS) shows a compositional bias: low complexity. Lys-161 is covalently cross-linked (Glycyl lysine isopeptide (Lys-Gly) (interchain with G-Cter in ubiquitin)). Disordered regions lie at residues 167–233 (ASKA…PAKK) and 249–274 (KTPV…RVKK). 2 stretches are compositionally biased toward low complexity: residues 175-185 (AVKPKTAAAKK) and 221-233 (AAKT…PAKK).

It belongs to the histone H1/H5 family.

Its subcellular location is the nucleus. The protein resides in the chromosome. In terms of biological role, histones H1 are necessary for the condensation of nucleosome chains into higher-order structures. In Arabidopsis thaliana (Mouse-ear cress), this protein is Histone H1.1.